Here is a 128-residue protein sequence, read N- to C-terminus: UPF0102 protein PSPTO_4420 (128 aa).

Belongs to the UPF0102 family.

The protein is UPF0102 protein PSPTO_4420 of Pseudomonas syringae pv. tomato (strain ATCC BAA-871 / DC3000).